Here is a 434-residue protein sequence, read N- to C-terminus: Histidinol dehydrogenase (434 aa).

The NAD(+) site is built by Tyr129, Gln191, and Asn214. Residues Ser240, Gln262, and His265 each coordinate substrate. Zn(2+) is bound by residues Gln262 and His265. Catalysis depends on proton acceptor residues Glu329 and His330. 4 residues coordinate substrate: His330, Asp363, Glu417, and His422. Zn(2+) is bound at residue Asp363. A Zn(2+)-binding site is contributed by His422.

The protein belongs to the histidinol dehydrogenase family. Zn(2+) is required as a cofactor.

It carries out the reaction L-histidinol + 2 NAD(+) + H2O = L-histidine + 2 NADH + 3 H(+). Its pathway is amino-acid biosynthesis; L-histidine biosynthesis; L-histidine from 5-phospho-alpha-D-ribose 1-diphosphate: step 9/9. Catalyzes the sequential NAD-dependent oxidations of L-histidinol to L-histidinaldehyde and then to L-histidine. The chain is Histidinol dehydrogenase from Colwellia psychrerythraea (strain 34H / ATCC BAA-681) (Vibrio psychroerythus).